The chain runs to 298 residues: Phospholipase A1 (298 aa).

A disulfide bond links Cys4 and Cys87. N-linked (GlcNAc...) asparagine glycans are attached at residues Asn88 and Asn122. The Nucleophile role is filled by Ser134. The active-site Charge relay system is Asp162. Intrachain disulfides connect Cys173–Cys178 and Cys216–Cys225. The active-site Charge relay system is His227. 3 cysteine pairs are disulfide-bonded: Cys242/Cys266, Cys243/Cys291, and Cys259/Cys264.

The protein belongs to the AB hydrolase superfamily. Lipase family. In terms of tissue distribution, expressed by the venom gland.

Its subcellular location is the secreted. The catalysed reaction is a 1,2-diacyl-sn-glycero-3-phosphocholine + H2O = a 2-acyl-sn-glycero-3-phosphocholine + a fatty acid + H(+). Catalyzes the hydrolysis of phosphatidylcholine with phospholipase A1 activity. May act as an allergen and induce hemolytic activity. This chain is Phospholipase A1, found in Vespula squamosa (Southern yellow jacket).